Consider the following 209-residue polypeptide: Claudin-4 (209 aa).

Residues 1–9 (MASMGLQVT) are Cytoplasmic-facing. Positions 1–103 (MASMGLQVTG…GVLLSVVGGK (103 aa)) are interaction with EPHA2. The helical transmembrane segment at 10 to 30 (GIALAVLGWLAVMLCCALPMW) threads the bilayer. Over 31–81 (RVTAFIGSNIVTSQTIWEGLWMNCVVQSTGQMQCKVYDSLLALPQDLQAAR) the chain is Extracellular. A disulfide bridge connects residues C54 and C64. The chain crosses the membrane as a helical span at residues 82–102 (ALVIISIIVAALGVLLSVVGG). Topologically, residues 103-117 (KCTNCLEDESAKAKT) are cytoplasmic. The chain crosses the membrane as a helical span at residues 118-138 (MIVAGVVFLLAGLLVIVPVSW). The Extracellular portion of the chain corresponds to 139 to 160 (TAHNIIQDFYNPLVASGQKREM). Residues 161 to 181 (GASLYVGWAASGLLLLGGGLL) form a helical membrane-spanning segment. At 182-209 (CCNCPPRTDKPYSAKYSAARSAAASNYV) the chain is on the cytoplasmic side. Phosphotyrosine; by EPHA2 is present on Y208. An interactions with TJP1, TJP2 and TJP3 region spans residues 208-209 (YV).

It belongs to the claudin family. As to quaternary structure, interacts with EPHA2; phosphorylates CLDN4 and may regulate tight junctions. Directly interacts with TJP1/ZO-1, TJP2/ZO-2 and TJP3/ZO-3. Interacts with CLDN1. Interacts with CLDN8. Post-translationally, phosphorylated. Phosphorylation by EPHA2 is stimulated by EFNA1 and alters interaction with TJP1.

It localises to the cell junction. Its subcellular location is the tight junction. The protein localises to the cell membrane. In terms of biological role, channel-forming tight junction protein that mediates paracellular chloride transport in the kidney. Plays a critical role in the paracellular reabsorption of filtered chloride in the kidney collecting ducts. Claudins play a major role in tight junction-specific obliteration of the intercellular space, through calcium-independent cell-adhesion activity. This is Claudin-4 (CLDN4) from Chlorocebus aethiops (Green monkey).